A 506-amino-acid polypeptide reads, in one-letter code: MFSLQDLCRKNLFLPLEPLGKHVVQRLGLYWEGHGSVKRVGDCFICVDQIWILSIHKAVQIAASEGNEDIVKLFLLWKGSLQYAIIGALEGRQYDLIQKYYNQIGDCHQILPLIQDPEIYERCHELNVTCTFQCLFQHAIRDNMLPIFQKYGEDLNGNRGMVQLLYEMACRLQNYDIIKWIGFNLHVYNLEAIFSIAFVRKDLTLYSLGYMLLLDRMSTVDRNFISIITRHLEYASKKGLFDFVLESLKYGGQVDTVLFQAVKYNHRKILAHFIHEIPRETVEKLILHAVESRASRKTFNLLLSSINYCVNPFVKKLLHAVVKHKYMLIIKLLLERPKKKINLVDAALFKLVKYSTYKEIVKYMDEFSVDPKRVVKMAARLMRVDLIKKISNDAWEDKLERIKHLKQMVNTMNHRNGKNLLMYNIHNITGYTHLNTKEAFNLTKFYAVHNATCLFKEMCKSCFEHDKIQLRELLEDCLHIANRHAYIQIAETADECIKYIDLITPK.

Belongs to the asfivirus MGF 505 family.

Functionally, plays a role in virus cell tropism, and may be required for efficient virus replication in macrophages. This is Protein MGF 505-9R from African swine fever virus (isolate Tick/South Africa/Pretoriuskop Pr4/1996) (ASFV).